We begin with the raw amino-acid sequence, 461 residues long: Adenine DNA glycosylase (461 aa).

Residue Glu69 is the Proton donor/acceptor of the active site. [4Fe-4S] cluster is bound by residues Cys226, Cys233, Cys236, and Cys242. The region spanning 296-437 is the Nudix hydrolase domain; that stretch reads QREERALVVI…RAALEIKKRK (142 aa). Positions 340-366 match the Nudix box motif; that stretch reads FGQESWPKDMDAEFQKSIAQWISNDSR.

This sequence belongs to the Nth/MutY family. As to quaternary structure, monomer. Requires [4Fe-4S] cluster as cofactor.

It carries out the reaction Hydrolyzes free adenine bases from 7,8-dihydro-8-oxoguanine:adenine mismatched double-stranded DNA, leaving an apurinic site.. In terms of biological role, adenine glycosylase active on G-A mispairs. Has glycosylase and nicking activities and is active at A/G and A/GO sites. The polypeptide is Adenine DNA glycosylase (myh1) (Schizosaccharomyces pombe (strain 972 / ATCC 24843) (Fission yeast)).